The primary structure comprises 109 residues: Nucleoid-associated protein Asuc_0997 (109 aa).

Positions 1-23 are disordered; it reads MFGKGGLGGLMKQAQQMQERMQK.

It belongs to the YbaB/EbfC family. In terms of assembly, homodimer.

Its subcellular location is the cytoplasm. It localises to the nucleoid. In terms of biological role, binds to DNA and alters its conformation. May be involved in regulation of gene expression, nucleoid organization and DNA protection. This Actinobacillus succinogenes (strain ATCC 55618 / DSM 22257 / CCUG 43843 / 130Z) protein is Nucleoid-associated protein Asuc_0997.